The following is a 623-amino-acid chain: Frizzled and smoothened-like protein M (623 aa).

The N-terminal stretch at 1–18 (MKSIFIIIFILYVFQVNS) is a signal peptide. Residues 19–243 (QTIYPIDPSG…WDQLYNLSNT (225 aa)) lie on the Extracellular side of the membrane. An FZ domain is found at 25–163 (DPSGKCEQYI…NYSEFNLTNY (139 aa)). Disulfide bonds link cysteine 30–cysteine 100 and cysteine 42–cysteine 93. N-linked (GlcNAc...) asparagine glycans are attached at residues asparagine 57, asparagine 106, asparagine 109, asparagine 154, asparagine 159, asparagine 169, asparagine 199, and asparagine 239. The helical transmembrane segment at 244–264 (LAVLSTFGSLYLLVTFIILNP) threads the bilayer. Over 265 to 273 (KVTSFDRMY) the chain is Cytoplasmic. The chain crosses the membrane as a helical span at residues 274–294 (GFFNGSVFMMSLSGVILFIAG). Residues 295–317 (GPRALIKDGGARISVFEDPLCSS) are Extracellular-facing. The helical transmembrane segment at 318 to 338 (TGFIFQLFAINAILFWAYMGF) threads the bilayer. Residues 339 to 354 (DLWWRVKYITKPLNIQ) are Cytoplasmic-facing. The helical transmembrane segment at 355–375 (KYYVPIAFTISFIFSVIPLAT) threads the bilayer. The Extracellular portion of the chain corresponds to 376-397 (KNYRMVRGNIHCWVHKAVLQNT). A helical membrane pass occupies residues 398-418 (LFFGPLGLTLTISTGFIGLVI). The Cytoplasmic portion of the chain corresponds to 419–439 (YEIYKIVKATGRGGIMKLEIK). Residues 440-460 (PILNIVLIYFSFVYIFAFNFH) traverse the membrane as a helical segment. The Extracellular portion of the chain corresponds to 461–494 (NDNNSKNTYGSIDEFFQCTLESDDPSKCTVGGPS). Asparagine 463 carries N-linked (GlcNAc...) asparagine glycosylation. Residues 495-515 (IGSLGYFIYCIRIYGIYCFFL) traverse the membrane as a helical segment. Topologically, residues 516–623 (QGLNERAFKI…DIEIGSVNIK (108 aa)) are cytoplasmic. Residues 552–590 (PSESGNSSTTAGTSTTINNSNINKKNNNSKPTLSTMDSN) are disordered. A compositionally biased stretch (low complexity) spans 555–580 (SGNSSTTAGTSTTINNSNINKKNNNS).

The protein belongs to the G-protein coupled receptor Fz/Smo family.

Its subcellular location is the membrane. The protein is Frizzled and smoothened-like protein M (fslM-1) of Dictyostelium discoideum (Social amoeba).